Here is a 160-residue protein sequence, read N- to C-terminus: Cytochrome b6-f complex subunit 4 (160 aa).

The next 3 membrane-spanning stretches (helical) occupy residues 36 to 56 (LLYI…GLAV), 95 to 115 (LLGI…PFIE), and 131 to 151 (SLFL…CLPI).

The protein belongs to the cytochrome b family. PetD subfamily. In terms of assembly, the 4 large subunits of the cytochrome b6-f complex are cytochrome b6, subunit IV (17 kDa polypeptide, PetD), cytochrome f and the Rieske protein, while the 4 small subunits are PetG, PetL, PetM and PetN. The complex functions as a dimer.

It is found in the cellular thylakoid membrane. Its function is as follows. Component of the cytochrome b6-f complex, which mediates electron transfer between photosystem II (PSII) and photosystem I (PSI), cyclic electron flow around PSI, and state transitions. The polypeptide is Cytochrome b6-f complex subunit 4 (Prochlorococcus marinus (strain NATL2A)).